The following is a 189-amino-acid chain: Pyridoxal 5'-phosphate synthase subunit PdxT (189 aa).

Position 52–54 (52–54 (GES)) interacts with L-glutamine. Cysteine 81 (nucleophile) is an active-site residue. L-glutamine-binding positions include arginine 108 and 136–137 (IR). Catalysis depends on charge relay system residues histidine 172 and glutamate 174.

This sequence belongs to the glutaminase PdxT/SNO family. As to quaternary structure, in the presence of PdxS, forms a dodecamer of heterodimers. Only shows activity in the heterodimer.

The catalysed reaction is aldehydo-D-ribose 5-phosphate + D-glyceraldehyde 3-phosphate + L-glutamine = pyridoxal 5'-phosphate + L-glutamate + phosphate + 3 H2O + H(+). It catalyses the reaction L-glutamine + H2O = L-glutamate + NH4(+). The protein operates within cofactor biosynthesis; pyridoxal 5'-phosphate biosynthesis. Functionally, catalyzes the hydrolysis of glutamine to glutamate and ammonia as part of the biosynthesis of pyridoxal 5'-phosphate. The resulting ammonia molecule is channeled to the active site of PdxS. In Haemophilus ducreyi (strain 35000HP / ATCC 700724), this protein is Pyridoxal 5'-phosphate synthase subunit PdxT.